The sequence spans 188 residues: Pyridoxal 5'-phosphate synthase subunit PdxT (188 aa).

An L-glutamine-binding site is contributed by 47-49 (GES). The active-site Nucleophile is Cys79. Residues Arg106 and 134–135 (IR) contribute to the L-glutamine site. Residues His169 and Glu171 each act as charge relay system in the active site.

The protein belongs to the glutaminase PdxT/SNO family. In the presence of PdxS, forms a dodecamer of heterodimers. Only shows activity in the heterodimer.

The enzyme catalyses aldehydo-D-ribose 5-phosphate + D-glyceraldehyde 3-phosphate + L-glutamine = pyridoxal 5'-phosphate + L-glutamate + phosphate + 3 H2O + H(+). It carries out the reaction L-glutamine + H2O = L-glutamate + NH4(+). The protein operates within cofactor biosynthesis; pyridoxal 5'-phosphate biosynthesis. In terms of biological role, catalyzes the hydrolysis of glutamine to glutamate and ammonia as part of the biosynthesis of pyridoxal 5'-phosphate. The resulting ammonia molecule is channeled to the active site of PdxS. The sequence is that of Pyridoxal 5'-phosphate synthase subunit PdxT from Caldicellulosiruptor bescii (strain ATCC BAA-1888 / DSM 6725 / KCTC 15123 / Z-1320) (Anaerocellum thermophilum).